A 299-amino-acid chain; its full sequence is Nucleotide-binding protein SAV_6292 (299 aa).

23 to 30 (GMSGAGRS) is an ATP binding site. 74 to 77 (DVRG) provides a ligand contact to GTP.

This sequence belongs to the RapZ-like family.

Its function is as follows. Displays ATPase and GTPase activities. This is Nucleotide-binding protein SAV_6292 from Streptomyces avermitilis (strain ATCC 31267 / DSM 46492 / JCM 5070 / NBRC 14893 / NCIMB 12804 / NRRL 8165 / MA-4680).